We begin with the raw amino-acid sequence, 113 residues long: UPF0482 protein YnfB (113 aa).

Positions 1–28 (MKITLSKRIGLLAFLLPCALALSTTVHA) are cleaved as a signal peptide.

Belongs to the UPF0482 family.

The chain is UPF0482 protein YnfB from Shigella flexneri serotype 5b (strain 8401).